We begin with the raw amino-acid sequence, 96 residues long: Transcription and mRNA export factor ENY2 (96 aa).

Belongs to the ENY2 family. In terms of assembly, component of the nuclear pore complex (NPC)-associated TREX-2 complex (transcription and export complex 2). Component of the SAGA transcription coactivator-HAT complex. Within the SAGA complex, participates in a subcomplex of SAGA called the DUB module (deubiquitination module).

It is found in the nucleus. It localises to the nucleoplasm. Its function is as follows. Involved in mRNA export coupled transcription activation by association with both the TREX-2 and the SAGA complexes. The transcription regulatory histone acetylation (HAT) complex SAGA is a multiprotein complex that activates transcription by remodeling chromatin and mediating histone acetylation and deubiquitination. Within the SAGA complex, participates in a subcomplex that specifically deubiquitinates histones. The SAGA complex is recruited to specific gene promoters by activators, where it is required for transcription. The TREX-2 complex functions in docking export-competent ribonucleoprotein particles (mRNPs) to the nuclear entrance of the nuclear pore complex (nuclear basket). TREX-2 participates in mRNA export and accurate chromatin positioning in the nucleus by tethering genes to the nuclear periphery. The polypeptide is Transcription and mRNA export factor ENY2 (Taeniopygia guttata (Zebra finch)).